Consider the following 245-residue polypeptide: Geranylgeranylglyceryl phosphate synthase (245 aa).

Mg(2+) contacts are provided by Asp-24 and Ser-54. Sn-glycerol 1-phosphate-binding positions include 172 to 178 (YLEAGSG), 203 to 204 (GG), and 225 to 226 (GT).

The protein belongs to the GGGP/HepGP synthase family. Group II subfamily. Mg(2+) is required as a cofactor.

It localises to the cytoplasm. It catalyses the reaction sn-glycerol 1-phosphate + (2E,6E,10E)-geranylgeranyl diphosphate = sn-3-O-(geranylgeranyl)glycerol 1-phosphate + diphosphate. The protein operates within membrane lipid metabolism; glycerophospholipid metabolism. Prenyltransferase that catalyzes the transfer of the geranylgeranyl moiety of geranylgeranyl diphosphate (GGPP) to the C3 hydroxyl of sn-glycerol-1-phosphate (G1P). This reaction is the first ether-bond-formation step in the biosynthesis of archaeal membrane lipids. This chain is Geranylgeranylglyceryl phosphate synthase, found in Staphylothermus marinus (strain ATCC 43588 / DSM 3639 / JCM 9404 / F1).